A 393-amino-acid polypeptide reads, in one-letter code: Fractalkine (393 aa).

The N-terminal stretch at 1–24 (MAPSQLAWLLRLAAFFHLCTLLAG) is a signal peptide. The tract at residues 25–100 (QHLGMTKCNI…HQTAALTRNG (76 aa)) is chemokine and involved in interaction with ITGAV:ITGB3 and ITGA4:ITGB1. Over 25 to 337 (QHLGMTKCNI…PDSQAATRRQ (313 aa)) the chain is Extracellular. Intrachain disulfides connect Cys-32–Cys-58 and Cys-36–Cys-74. Asn-33 carries an N-linked (GlcNAc...) asparagine glycan. Residues 101-337 (GKFEKRVDNV…PDSQAATRRQ (237 aa)) form a mucin-like stalk region. 2 disordered regions span residues 114-184 (ITSA…PQST) and 213-303 (EKAT…SGSQ). 2 stretches are compositionally biased toward polar residues: residues 153 to 172 (GTSQ…TSKA) and 223 to 240 (ALST…NVGS). Residues 338–358 (AVGLLAFLGLLFCLGVAMFAY) traverse the membrane as a helical segment. Residues 359-393 (QSLQGCPRKMAGEMVEGLRYVPRSCGSNSYVLVPV) lie on the Cytoplasmic side of the membrane.

The protein belongs to the intercrine delta family. Monomer. Forms a ternary complex with CX3CR1 and ITGAV:ITGB3 or ITGA4:ITGB1. Post-translationally, a soluble short form may be released by proteolytic cleavage from the long membrane-anchored form. In terms of tissue distribution, highest levels in brain (neurons). Significant levels in kidney, heart, lung and adrenal gland.

The protein localises to the cell membrane. It localises to the secreted. In terms of biological role, chemokine that acts as a ligand for both CX3CR1 and integrins ITGAV:ITGB3 and ITGA4:ITGB1. The CX3CR1-CX3CL1 signaling exerts distinct functions in different tissue compartments, such as immune response, inflammation, cell adhesion and chemotaxis. Regulates leukocyte adhesion and migration processes at the endothelium. Can activate integrins in both a CX3CR1-dependent and CX3CR1-independent manner. In the presence of CX3CR1, activates integrins by binding to the classical ligand-binding site (site 1) in integrins. In the absence of CX3CR1, binds to a second site (site 2) in integrins which is distinct from site 1 and enhances the binding of other integrin ligands to site 1. Its function is as follows. The soluble form is chemotactic for T-cells and monocytes, but not for neutrophils. Functionally, the membrane-bound form promotes adhesion of those leukocytes to endothelial cells. The sequence is that of Fractalkine (Cx3cl1) from Rattus norvegicus (Rat).